The primary structure comprises 568 residues: Phosphoprotein (568 aa).

The interval 1–25 (MDQDAFFSERDPEAEGETPRKQESL) is disordered. Residues 7–24 (FSERDPEAEGETPRKQES) show a composition bias toward basic and acidic residues. The interval 33–41 (DVVLSYKPT) is N0 binding. The interval 55–322 (DNSKENKPSC…TTANEEGTSN (268 aa)) is disordered. Basic and acidic residues-rich tracts occupy residues 56-105 (NSKE…HARI), 132-144 (RNTR…PNER), 151-167 (PTDE…KREE), and 175-190 (EEVR…REGR). Polar residues predominate over residues 191-216 (TNNNGRSMETSSTHSTRITDVITNPS). Positions 239–265 (TRSERTQNSELHKSTSEDSSNLEDHNT) are enriched in basic and acidic residues. Low complexity predominate over residues 294-304 (YTTNNANNNTK). Residues 344–411 (FELSRSASHV…SSRDLHKRFS (68 aa)) form a multimerization region. The stretch at 387-416 (EENRTLLKQIQEEIDSSRDLHKRFSEYQKE) forms a coiled coil. The l protein binding stretch occupies residues 412 to 445 (EYQKEQNSLMMANLSTLHIITDRGGKTGDPSDTT). Disordered stretches follow at residues 434-455 (RGGK…TKGK) and 494-513 (VLEE…LIPS). A compositionally biased stretch (polar residues) spans 441 to 450 (PSDTTRSPSV). The interaction with the nucleocapsid (N-RNA) stretch occupies residues 479 to 568 (DLIREDELRD…FEEDIDSLTN (90 aa)).

Belongs to the respirovirus P protein family. As to quaternary structure, homotetramer. Interacts (via multimerization domain) with polymerase L; this interaction forms the polymerase complex. Interacts (via N-terminus) with N0; this interaction allows P to chaperon N0 before encapsidation and form the N-P complex. Interacts (via C-terminus) with N-RNA template; this interaction positions the polymerase on the template.

Functionally, essential cofactor of the RNA polymerase L that plays a central role in the transcription and replication by forming the polymerase complex with RNA polymerase L and recruiting L to the genomic N-RNA template for RNA synthesis. Also plays a central role in the encapsidation of nascent RNA chains by forming the encapsidation complex with the nucleocapsid protein N (N-P complex). Acts as a chaperone for newly synthesized free N protein, so-called N0, allowing encapsidation of nascent RNA chains during replication. The nucleoprotein protein N prevents excessive phosphorylation of P, which leads to down-regulation of viral transcription/ replication. Participates, together with N, in the formation of viral factories (viroplasms), which are large inclusions in the host cytoplasm where replication takes place. Recruits host PI4KB and remodel the host endoplasmic reticulum membrane to form viral replication factories. The protein is Phosphoprotein (P/C) of Human parainfluenza 1 virus (strain CI-5/73) (HPIV-1).